A 187-amino-acid polypeptide reads, in one-letter code: Large ribosomal subunit protein uL18 (187 aa).

This sequence belongs to the universal ribosomal protein uL18 family. As to quaternary structure, part of the 50S ribosomal subunit. Interacts with proteins L5 and L21e, and attaches the 5S rRNA to the 23S rRNA. Has been cross-linked to L21e.

Functionally, this is one of 5 proteins that mediate the attachment of the 5S rRNA onto the large ribosomal subunit, where it forms part of the central protuberance and stabilizes the orientation of adjacent RNA domains. This chain is Large ribosomal subunit protein uL18 (rpl18), found in Haloarcula marismortui (strain ATCC 43049 / DSM 3752 / JCM 8966 / VKM B-1809) (Halobacterium marismortui).